The following is a 377-amino-acid chain: Probable staphylococcal-like nuclease CAN3 (377 aa).

The N-myristoyl glycine moiety is linked to residue G2. C7 is lipidated: S-palmitoyl cysteine. The tract at residues 15-57 (GDHYPYYKPTSRPHYQPPHYHGQPAAPPAPPQQQPLGPHGVTP) is disordered. The segment covering 27-38 (PHYQPPHYHGQP) has biased composition (low complexity). Residues 177-353 (NTLPVYDKCI…KAANRGLWAS (177 aa)) form the TNase-like domain. Position 190 (D190) interacts with Ca(2+). R260 is an active-site residue. Residue D265 coordinates Ca(2+). Residues E268 and R302 contribute to the active site.

It belongs to the thermonuclease family. Requires Ca(2+) as cofactor.

The protein localises to the cell membrane. Enzyme that catalyzes the hydrolysis of both DNA and RNA at the 5' position of the phosphodiester bond. In Oryza sativa subsp. japonica (Rice), this protein is Probable staphylococcal-like nuclease CAN3.